Here is an 83-residue protein sequence, read N- to C-terminus: High-potential iron-sulfur protein (83 aa).

Residues Cys43, Cys46, Cys61, and Cys75 each contribute to the [4Fe-4S] cluster site.

It belongs to the high-potential iron-sulfur protein (HiPIP) family. In terms of assembly, homodimer.

It localises to the periplasm. Specific class of high-redox-potential 4Fe-4S ferredoxins. Functions in anaerobic electron transport in most purple and in some other photosynthetic bacteria and in at least one genus (Paracoccus) of halophilic, denitrifying bacteria. The protein is High-potential iron-sulfur protein of Isochromatium buderi (Chromatium buderi).